We begin with the raw amino-acid sequence, 260 residues long: 5'-nucleotidase SurE (260 aa).

4 residues coordinate a divalent metal cation: Asp-8, Asp-9, Ser-43, and Asn-96.

This sequence belongs to the SurE nucleotidase family. It depends on a divalent metal cation as a cofactor.

It localises to the cytoplasm. The catalysed reaction is a ribonucleoside 5'-phosphate + H2O = a ribonucleoside + phosphate. Its function is as follows. Nucleotidase that shows phosphatase activity on nucleoside 5'-monophosphates. The chain is 5'-nucleotidase SurE from Ruegeria pomeroyi (strain ATCC 700808 / DSM 15171 / DSS-3) (Silicibacter pomeroyi).